The chain runs to 505 residues: Flagellin (505 aa).

The protein belongs to the bacterial flagellin family.

It localises to the secreted. The protein localises to the bacterial flagellum. In terms of biological role, flagellin is the subunit protein which polymerizes to form the filaments of bacterial flagella. This Salmonella moscow protein is Flagellin (fliC).